Reading from the N-terminus, the 370-residue chain is MKKYLKDYEYKILYKRIIFTCWILLIYIFGTHIPAITTVRTYTAISNFYKMTAANVGGDYQALNVFSLGLGPWLTAMIFMTLFYYRDSDRMMKQTRREKSTKERIFTLILALIQAYFVVFTLLSHVKIDHSEKWLIILVLVTGAMILVWLSDLNMRFGIAGPMPIVMISIIRSIMRQNVALSELGPTLLISAALVLIIILLVLIFIEITEYRLPYLDVMDVSSRREHTYLAWKLNPGGSIAIMISFAAFFVLNSAVNLIVQFFNSKNNGVLNFLDFSTPIGITIFLILQLVLSYGISRLILDPKRKAKDFKKNGDFFPGVEPGKPTYHYLIHKARRISWIGAFIVTIIIGIPLYATLLIPQFSKEIYLSV.

Helical transmembrane passes span 17-37, 65-85, 105-125, 134-154, 155-175, 188-208, 240-260, 276-296, and 339-359; these read IIFTCWILLIYIFGTHIPAIT, VFSLGLGPWLTAMIFMTLFYY, IFTLILALIQAYFVVFTLLSH, WLIILVLVTGAMILVWLSDLN, MRFGIAGPMPIVMISIIRSIM, LLISAALVLIIILLVLIFIEI, IAIMISFAAFFVLNSAVNLIV, FSTPIGITIFLILQLVLSYGI, and WIGAFIVTIIIGIPLYATLLI.

Belongs to the SecY/SEC61-alpha family. SecY2 subfamily. As to quaternary structure, component of the accessory SecA2/SecY2 protein translocase complex required to export cell wall proteins. May form heterotrimers with SecE and SecG subunits.

It is found in the cell membrane. Functionally, part of the accessory SecA2/SecY2 system specifically required for export of possible cell wall proteins. The central subunit of a protein translocation channel. The chain is Accessory Sec system protein translocase subunit SecY2 from Staphylococcus carnosus (strain TM300).